The chain runs to 635 residues: Early transcription factor 70 kDa subunit (635 aa).

Positions arginine 32 to glutamate 185 constitute a Helicase ATP-binding domain. Residue histidine 45–threonine 52 coordinates ATP. The DEXH box motif lies at aspartate 135–histidine 138. Residues lysine 326–leucine 505 enclose the Helicase C-terminal domain.

Belongs to the helicase family. VETF subfamily. In terms of assembly, heterodimer of a 70 kDa and a 82 kDa subunit. Part of the early transcription complex composed of ETF, RAP94, and the DNA-directed RNA polymerase.

The protein localises to the virion. Acts with RNA polymerase to initiate transcription from early gene promoters. Is recruited by the RPO-associated protein of 94 kDa (RAP94) to form the early transcription complex, which also contains the core RNA polymerase. ETF heterodimer binds to early gene promoters. This chain is Early transcription factor 70 kDa subunit (VETFS), found in Oryctolagus cuniculus (Rabbit).